The following is a 201-amino-acid chain: Large ribosomal subunit protein uL4 (201 aa).

Positions 43-69 (TKAQKGRSDVSGGGAKPWKQKGSGRAR) are disordered.

It belongs to the universal ribosomal protein uL4 family. In terms of assembly, part of the 50S ribosomal subunit.

Functionally, one of the primary rRNA binding proteins, this protein initially binds near the 5'-end of the 23S rRNA. It is important during the early stages of 50S assembly. It makes multiple contacts with different domains of the 23S rRNA in the assembled 50S subunit and ribosome. In terms of biological role, forms part of the polypeptide exit tunnel. The protein is Large ribosomal subunit protein uL4 of Thioalkalivibrio sulfidiphilus (strain HL-EbGR7).